Here is an 833-residue protein sequence, read N- to C-terminus: Zinc phosphodiesterase ELAC protein 2 homolog (833 aa).

A mitochondrion-targeting transit peptide spans Met1 to His19. Pro residues predominate over residues Leu624–Pro646. The disordered stretch occupies residues Leu624 to Leu652.

Belongs to the RNase Z family. In terms of assembly, homodimer. Zn(2+) serves as cofactor. As to expression, highly expressed in the germline.

The protein resides in the mitochondrion. It localises to the nucleus. It catalyses the reaction Endonucleolytic cleavage of RNA, removing extra 3' nucleotides from tRNA precursor, generating 3' termini of tRNAs. A 3'-hydroxy group is left at the tRNA terminus and a 5'-phosphoryl group is left at the trailer molecule.. Functionally, zinc phosphodiesterase, which displays some tRNA 3'-processing endonuclease activity. Probably involved in tRNA maturation, by removing a 3'-trailer from precursor tRNA. Involved in germline proliferation. May be required for both mitosis and meiosis in germ cells. Its function is as follows. Does not regulate the mitochondrial unfolded protein response following mitochondrial stress. In terms of biological role, plays a role in mitochondrial unfolded protein response. Upon mitochondrial stress is exported from the nucleus where its tRNA endonuclease activity is negatively regulated. In response to mitochondrial stress, might be involved in activating a transcriptional response in an ATFS-1- and DVE-1-dependent manner. May play a role in negatively regulating the mitochondrial membrane potential. This chain is Zinc phosphodiesterase ELAC protein 2 homolog, found in Caenorhabditis elegans.